A 155-amino-acid polypeptide reads, in one-letter code: Ribosomal RNA large subunit methyltransferase H (155 aa).

S-adenosyl-L-methionine contacts are provided by residues Leu-73, Gly-104, and Ile-123–Phe-128.

The protein belongs to the RNA methyltransferase RlmH family. As to quaternary structure, homodimer.

It localises to the cytoplasm. The enzyme catalyses pseudouridine(1915) in 23S rRNA + S-adenosyl-L-methionine = N(3)-methylpseudouridine(1915) in 23S rRNA + S-adenosyl-L-homocysteine + H(+). Its function is as follows. Specifically methylates the pseudouridine at position 1915 (m3Psi1915) in 23S rRNA. The protein is Ribosomal RNA large subunit methyltransferase H of Francisella philomiragia subsp. philomiragia (strain ATCC 25017 / CCUG 19701 / FSC 153 / O#319-036).